The sequence spans 470 residues: Putative F-box/LRR-repeat protein At3g58920 (470 aa).

The region spanning Met1–Gln53 is the F-box domain. LRR repeat units lie at residues Lys114–Ser142, Cys143–Ser170, Phe173–Asp198, Phe225–Asp250, Glu287–Thr312, and Tyr342–Gly367.

The chain is Putative F-box/LRR-repeat protein At3g58920 from Arabidopsis thaliana (Mouse-ear cress).